Here is a 469-residue protein sequence, read N- to C-terminus: Phosphoenolpyruvate carboxylase (469 aa).

This sequence belongs to the PEPCase type 2 family. Homotetramer. Mg(2+) is required as a cofactor.

The enzyme catalyses oxaloacetate + phosphate = phosphoenolpyruvate + hydrogencarbonate. In terms of biological role, catalyzes the irreversible beta-carboxylation of phosphoenolpyruvate (PEP) to form oxaloacetate (OAA), a four-carbon dicarboxylic acid source for the tricarboxylic acid cycle. This chain is Phosphoenolpyruvate carboxylase, found in Pyrococcus abyssi (strain GE5 / Orsay).